A 399-amino-acid chain; its full sequence is MTEISDILLRTILDSRGNPTVEAEISTISGGFGRACAPSGASTGIYEAKVRPCDEAVADAYINLIPKLIELDSADQRGFDDTLHEVDGTSDLSGIGANIAVALSLANAKAAASTLNMELYQYLGGAFISQTPLPLGNVIGGGAHAVDATDIQEFLIVPTGASTAAEAVFTNALVHKRIKEILIARGKGCGKGDEGGWAPHIADLEAFEIVNEATTKVFDETGIEVRMGLDVAASEMWDAASGRYVYKNAKRTTEEQIAYIADLTEKYNLIYVEDPIQEEDFEGFARITEEVSGRDTLICGDDLFVTNASRLEEGIRNDACNCVLIKPNQIGTLTDTFETISLAHDYGYETVMSHRSGETTDNTIAHLATAFGCCFMKSGVVGGERIAKLNELIRIEEHF.

Glutamine 152 contributes to the (2R)-2-phosphoglycerate binding site. The active-site Proton donor is the glutamate 194. The Mg(2+) site is built by aspartate 230, glutamate 273, and aspartate 301. Positions 326, 355, 356, and 377 each coordinate (2R)-2-phosphoglycerate. Lysine 326 serves as the catalytic Proton acceptor.

This sequence belongs to the enolase family. It depends on Mg(2+) as a cofactor.

The protein localises to the cytoplasm. It localises to the secreted. The protein resides in the cell surface. The catalysed reaction is (2R)-2-phosphoglycerate = phosphoenolpyruvate + H2O. It participates in carbohydrate degradation; glycolysis; pyruvate from D-glyceraldehyde 3-phosphate: step 4/5. Its function is as follows. Catalyzes the reversible conversion of 2-phosphoglycerate (2-PG) into phosphoenolpyruvate (PEP). It is essential for the degradation of carbohydrates via glycolysis. In Methanocorpusculum labreanum (strain ATCC 43576 / DSM 4855 / Z), this protein is Enolase.